The sequence spans 859 residues: Bifunctional uridylyltransferase/uridylyl-removing enzyme (859 aa).

The uridylyltransferase stretch occupies residues M1–L325. Positions S326–L682 are uridylyl-removing. Positions V444–L566 constitute an HD domain. ACT domains follow at residues Q683–S762 and I791–V859.

The protein belongs to the GlnD family. Mg(2+) serves as cofactor.

It carries out the reaction [protein-PII]-L-tyrosine + UTP = [protein-PII]-uridylyl-L-tyrosine + diphosphate. It catalyses the reaction [protein-PII]-uridylyl-L-tyrosine + H2O = [protein-PII]-L-tyrosine + UMP + H(+). Uridylyltransferase (UTase) activity is inhibited by glutamine, while glutamine activates uridylyl-removing (UR) activity. Functionally, modifies, by uridylylation and deuridylylation, the PII regulatory proteins (GlnB and homologs), in response to the nitrogen status of the cell that GlnD senses through the glutamine level. Under low glutamine levels, catalyzes the conversion of the PII proteins and UTP to PII-UMP and PPi, while under higher glutamine levels, GlnD hydrolyzes PII-UMP to PII and UMP (deuridylylation). Thus, controls uridylylation state and activity of the PII proteins, and plays an important role in the regulation of nitrogen fixation and metabolism. This is Bifunctional uridylyltransferase/uridylyl-removing enzyme from Burkholderia vietnamiensis (strain G4 / LMG 22486) (Burkholderia cepacia (strain R1808)).